The sequence spans 349 residues: Methylthioribose-1-phosphate isomerase (349 aa).

Substrate contacts are provided by residues 51–53, arginine 94, and glutamine 199; that span reads RGA. The Proton donor role is filled by aspartate 240. Residue 250–251 participates in substrate binding; the sequence is NK.

This sequence belongs to the EIF-2B alpha/beta/delta subunits family. MtnA subfamily. Homodimer.

It catalyses the reaction 5-(methylsulfanyl)-alpha-D-ribose 1-phosphate = 5-(methylsulfanyl)-D-ribulose 1-phosphate. It functions in the pathway amino-acid biosynthesis; L-methionine biosynthesis via salvage pathway; L-methionine from S-methyl-5-thio-alpha-D-ribose 1-phosphate: step 1/6. In terms of biological role, catalyzes the interconversion of methylthioribose-1-phosphate (MTR-1-P) into methylthioribulose-1-phosphate (MTRu-1-P). The protein is Methylthioribose-1-phosphate isomerase of Bacillus mycoides (strain KBAB4) (Bacillus weihenstephanensis).